Consider the following 122-residue polypeptide: Glucagon-2 (122 aa).

The N-terminal stretch at 1-21 is a signal peptide; sequence MTSLHSLAGLLLLMIIQSSWQ. 2 propeptides span residues 83–86 and E122; that span reads NGLF.

It belongs to the glucagon family.

The protein localises to the secreted. Promotes hydrolysis of glycogen and lipids, and raises the blood sugar level. This chain is Glucagon-2 (gcg2), found in Lophius americanus (American angler).